Reading from the N-terminus, the 200-residue chain is NADH-quinone oxidoreductase subunit C (200 aa).

The protein belongs to the complex I 30 kDa subunit family. NDH-1 is composed of 14 different subunits. Subunits NuoB, C, D, E, F, and G constitute the peripheral sector of the complex.

The protein localises to the cell inner membrane. It carries out the reaction a quinone + NADH + 5 H(+)(in) = a quinol + NAD(+) + 4 H(+)(out). Functionally, NDH-1 shuttles electrons from NADH, via FMN and iron-sulfur (Fe-S) centers, to quinones in the respiratory chain. The immediate electron acceptor for the enzyme in this species is believed to be ubiquinone. Couples the redox reaction to proton translocation (for every two electrons transferred, four hydrogen ions are translocated across the cytoplasmic membrane), and thus conserves the redox energy in a proton gradient. In Agrobacterium fabrum (strain C58 / ATCC 33970) (Agrobacterium tumefaciens (strain C58)), this protein is NADH-quinone oxidoreductase subunit C.